The chain runs to 502 residues: TNF receptor-associated factor family protein DDB_G0268444 (502 aa).

The segment at 28–68 (CSICYESVYKKEIYQCKEIHWFCKTCWAESLFKKKECMICR) adopts an RING-type; degenerate zinc-finger fold. TRAF-type zinc fingers lie at residues 129-183 (KHLK…SRSL) and 185-243 (NHYK…PKSN). A coiled-coil region spans residues 261-295 (IESQSLQIKETNIKYENLLNKINKLEQLETESKCD). The MATH domain maps to 368-489 (KYKNRWSISN…DDSLVIDFSI (122 aa)).

Belongs to the TNF receptor-associated factor family. A subfamily.

The protein resides in the cytoplasm. Functionally, probable adapter protein and signal transducer that links members of the tumor necrosis factor receptor family to different signaling pathways by association with the receptor cytoplasmic domain and kinases. This Dictyostelium discoideum (Social amoeba) protein is TNF receptor-associated factor family protein DDB_G0268444.